We begin with the raw amino-acid sequence, 206 residues long: MKKMSARQQQILDFIKDEVRAKGYPPSVREIGEAVGLASSSTVHGHLDRLEKRGLIRRDKTKPRAIEILTDDMPTMEEQESVMYVPVIGKVTAGTPITAIENVEEHFPLPAHIVGSDNVYMLSVSGDSMINAGILDGDRVLVRQQSTADNGEIVVAMTEEGEATVKRIYKEASKVRLQPENDELEAMYFDNVSILGKVIGVYRTIH.

The H-T-H motif DNA-binding region spans 28-48; sequence VREIGEAVGLASSSTVHGHLD. Catalysis depends on for autocatalytic cleavage activity residues Ser-128 and Lys-166.

It belongs to the peptidase S24 family. As to quaternary structure, homodimer.

It carries out the reaction Hydrolysis of Ala-|-Gly bond in repressor LexA.. Represses a number of genes involved in the response to DNA damage (SOS response), including recA and lexA. In the presence of single-stranded DNA, RecA interacts with LexA causing an autocatalytic cleavage which disrupts the DNA-binding part of LexA, leading to derepression of the SOS regulon and eventually DNA repair. The polypeptide is LexA repressor (Exiguobacterium sp. (strain ATCC BAA-1283 / AT1b)).